The sequence spans 160 residues: SsrA-binding protein (160 aa).

The protein belongs to the SmpB family.

The protein resides in the cytoplasm. Its function is as follows. Required for rescue of stalled ribosomes mediated by trans-translation. Binds to transfer-messenger RNA (tmRNA), required for stable association of tmRNA with ribosomes. tmRNA and SmpB together mimic tRNA shape, replacing the anticodon stem-loop with SmpB. tmRNA is encoded by the ssrA gene; the 2 termini fold to resemble tRNA(Ala) and it encodes a 'tag peptide', a short internal open reading frame. During trans-translation Ala-aminoacylated tmRNA acts like a tRNA, entering the A-site of stalled ribosomes, displacing the stalled mRNA. The ribosome then switches to translate the ORF on the tmRNA; the nascent peptide is terminated with the 'tag peptide' encoded by the tmRNA and targeted for degradation. The ribosome is freed to recommence translation, which seems to be the essential function of trans-translation. The chain is SsrA-binding protein from Dinoroseobacter shibae (strain DSM 16493 / NCIMB 14021 / DFL 12).